A 299-amino-acid polypeptide reads, in one-letter code: Recombination-associated protein RdgC (299 aa).

It belongs to the RdgC family.

The protein resides in the cytoplasm. It localises to the nucleoid. May be involved in recombination. This is Recombination-associated protein RdgC from Neisseria meningitidis serogroup B (strain ATCC BAA-335 / MC58).